Here is a 291-residue protein sequence, read N- to C-terminus: Probable L-ascorbate peroxidase 3, peroxisomal (291 aa).

Histidine 41 acts as the Proton acceptor in catalysis. A disordered region spans residues 114–133 (YVPGRRDSSDSPEEGRLPDA). Residues 116–133 (PGRRDSSDSPEEGRLPDA) show a composition bias toward basic and acidic residues. Position 161 (histidine 161) interacts with heme b. Residues threonine 162, threonine 178, and aspartate 185 each contribute to the K(+) site. A helical transmembrane segment spans residues 263–283 (LLMQTAAGVAVAAAVVAWAYL).

It belongs to the peroxidase family. Ascorbate peroxidase subfamily. Heme b is required as a cofactor. In terms of tissue distribution, expressed in stems.

The protein localises to the peroxisome membrane. The enzyme catalyses L-ascorbate + H2O2 = L-dehydroascorbate + 2 H2O. Plays a key role in hydrogen peroxide removal. This chain is Probable L-ascorbate peroxidase 3, peroxisomal, found in Oryza sativa subsp. japonica (Rice).